Reading from the N-terminus, the 378-residue chain is Glutamate 5-kinase (378 aa).

K20 contacts ATP. The substrate site is built by S60, D147, and N159. Residues 179–180 (TD) and 221–227 (TGGMATK) contribute to the ATP site. One can recognise a PUA domain in the interval 286 to 364 (AGDIVIDAGA…QEIYKVLGYE (79 aa)).

This sequence belongs to the glutamate 5-kinase family.

The protein localises to the cytoplasm. The catalysed reaction is L-glutamate + ATP = L-glutamyl 5-phosphate + ADP. Its pathway is amino-acid biosynthesis; L-proline biosynthesis; L-glutamate 5-semialdehyde from L-glutamate: step 1/2. Its function is as follows. Catalyzes the transfer of a phosphate group to glutamate to form L-glutamate 5-phosphate. The chain is Glutamate 5-kinase from Photobacterium profundum (strain SS9).